The primary structure comprises 105 residues: UPF0060 membrane protein Ajs_1326 (105 aa).

4 helical membrane-spanning segments follow: residues 4 to 24 (FALF…PYLW), 30 to 50 (SAWL…LLTL), 60 to 80 (AAYG…VDGI), and 82 to 102 (PTAW…LIMF).

Belongs to the UPF0060 family.

Its subcellular location is the cell inner membrane. The polypeptide is UPF0060 membrane protein Ajs_1326 (Acidovorax sp. (strain JS42)).